A 165-amino-acid polypeptide reads, in one-letter code: Calcium-binding protein H (165 aa).

4 consecutive EF-hand domains span residues 7-42, 43-78, 88-123, and 124-159; these read QIEK…MGSK, YPEK…RYQD, YFQD…IGSD, and HPKE…TIRS. Ca(2+) is bound by residues Asp-20, Asp-22, Asn-24, Glu-26, Glu-31, Asp-56, Asp-58, Glu-60, Lys-62, Glu-67, Asp-101, Asn-103, Asp-105, Arg-107, Glu-112, Asp-137, Asn-139, Asp-141, Tyr-143, and Glu-148.

The sequence is that of Calcium-binding protein H (cbpH) from Dictyostelium discoideum (Social amoeba).